A 436-amino-acid chain; its full sequence is Enolase (436 aa).

Residue Gln-167 coordinates (2R)-2-phosphoglycerate. The active-site Proton donor is the Glu-209. Mg(2+)-binding residues include Asp-246, Glu-291, and Asp-318. 4 residues coordinate (2R)-2-phosphoglycerate: Lys-343, Arg-372, Ser-373, and Lys-394. The active-site Proton acceptor is the Lys-343.

It belongs to the enolase family. As to quaternary structure, component of the RNA degradosome, a multiprotein complex involved in RNA processing and mRNA degradation. The cofactor is Mg(2+).

The protein localises to the cytoplasm. Its subcellular location is the secreted. It is found in the cell surface. The catalysed reaction is (2R)-2-phosphoglycerate = phosphoenolpyruvate + H2O. The protein operates within carbohydrate degradation; glycolysis; pyruvate from D-glyceraldehyde 3-phosphate: step 4/5. In terms of biological role, catalyzes the reversible conversion of 2-phosphoglycerate (2-PG) into phosphoenolpyruvate (PEP). It is essential for the degradation of carbohydrates via glycolysis. The polypeptide is Enolase (Haemophilus influenzae (strain PittEE)).